A 475-amino-acid polypeptide reads, in one-letter code: Ankyrin repeat, SAM and basic leucine zipper domain-containing protein 1 (475 aa).

The disordered stretch occupies residues 1–25 (MAAGALRGLPVAGGGESSESEDDGW). Phosphoserine occurs at positions 17, 18, and 20. ANK repeat units lie at residues 45 to 74 (EKKE…SVDS), 78 to 107 (YGWT…NASF), 110 to 144 (DKQT…DPNV), 148 to 177 (RLMT…EVNT), 181 to 210 (NGYT…NKML), and 214 to 243 (DGKM…PLEG). The region spanning 272-334 (SYTAFGDLEV…KILAALKELQ (63 aa)) is the SAM domain.

In terms of assembly, interacts with DDX4, PIWIL1, RANBP9 and TDRD1.

Its subcellular location is the cytoplasm. Plays a central role during spermatogenesis by repressing transposable elements and preventing their mobilization, which is essential for the germline integrity. Acts via the piRNA metabolic process, which mediates the repression of transposable elements during meiosis by forming complexes composed of piRNAs and Piwi proteins and governs the methylation and subsequent repression of transposons. Its association with pi-bodies suggests a participation in the primary piRNAs metabolic process. Required prior to the pachytene stage to facilitate the production of multiple types of piRNAs, including those associated with repeats involved in the regulation of retrotransposons. May act by mediating protein-protein interactions during germ cell maturation. The chain is Ankyrin repeat, SAM and basic leucine zipper domain-containing protein 1 (ASZ1) from Chlorocebus aethiops (Green monkey).